The sequence spans 316 residues: Ribosomal RNA small subunit methyltransferase H (316 aa).

Residues 39-41, D56, F82, D103, and Q110 contribute to the S-adenosyl-L-methionine site; that span reads GGH.

Belongs to the methyltransferase superfamily. RsmH family.

The protein localises to the cytoplasm. It carries out the reaction cytidine(1402) in 16S rRNA + S-adenosyl-L-methionine = N(4)-methylcytidine(1402) in 16S rRNA + S-adenosyl-L-homocysteine + H(+). Its function is as follows. Specifically methylates the N4 position of cytidine in position 1402 (C1402) of 16S rRNA. This is Ribosomal RNA small subunit methyltransferase H from Methylacidiphilum infernorum (isolate V4) (Methylokorus infernorum (strain V4)).